Reading from the N-terminus, the 311-residue chain is Oligopeptide transport system permease protein OppC (311 aa).

The Cytoplasmic portion of the chain corresponds to 1-48 (MTDYRTQPINQKNADFVEQVADRIEEMQLEGRSLWQDAKRRFFRNKAA). A helical transmembrane segment spans residues 49-69 (VASLIILAFIIIFITVAPWFF). Topologically, residues 70 to 113 (PFTYEDTDWNMMSAAPTMEGYHFFGTDASGRDLLVRTAIGGRIS) are periplasmic. In terms of domain architecture, ABC transmembrane type-1 spans 110 to 299 (GRISLLVGIA…LTLFCFNFIG (190 aa)). A helical transmembrane segment spans residues 114-134 (LLVGIAGAFISVTIGTIYGAI). Over 135 to 146 (SGYVGGKTDMLM) the chain is Cytoplasmic. A helical transmembrane segment spans residues 147-169 (MRFLEILSSFPFMFFVILLVTLF). Residues 170–172 (GQN) lie on the Periplasmic side of the membrane. The helical transmembrane segment at 173–192 (IFLIFIAIGAIAWLGLARIV) threads the bilayer. The Cytoplasmic segment spans residues 193 to 222 (RGQTLSLKNKEFVEAAIVCGVPRRQIILKH). A helical transmembrane segment spans residues 223-243 (IIPNVLGLVAVYASLEVPGLI). Over 244–278 (LFESFLSFLGLGTQEPMSSWGALLSDGAAQMEVSP) the chain is Periplasmic. Residues 279 to 299 (WLLIFPAFFLCLTLFCFNFIG) traverse the membrane as a helical segment. Over 300–311 (DGLRDALDPKDR) the chain is Cytoplasmic.

Belongs to the binding-protein-dependent transport system permease family. OppBC subfamily. The complex is composed of two ATP-binding proteins (OppD and OppF), two transmembrane proteins (OppB and OppC) and a solute-binding protein (OppA).

The protein resides in the cell inner membrane. Functionally, part of the ABC transporter complex OppABCDF involved in the uptake of oligopeptides. Probably responsible for the translocation of the substrate across the membrane. In Haemophilus influenzae (strain ATCC 51907 / DSM 11121 / KW20 / Rd), this protein is Oligopeptide transport system permease protein OppC (oppC).